We begin with the raw amino-acid sequence, 285 residues long: Nucleotide-binding protein HI_1146 (285 aa).

8–15 is an ATP binding site; it reads GRSGAGKS. 56 to 59 provides a ligand contact to GTP; that stretch reads DIRN.

It belongs to the RapZ-like family.

Its function is as follows. Displays ATPase and GTPase activities. This Haemophilus influenzae (strain ATCC 51907 / DSM 11121 / KW20 / Rd) protein is Nucleotide-binding protein HI_1146.